Reading from the N-terminus, the 303-residue chain is tRNA pseudouridine synthase B (303 aa).

Residue aspartate 47 is the Nucleophile of the active site.

This sequence belongs to the pseudouridine synthase TruB family. Type 1 subfamily.

The catalysed reaction is uridine(55) in tRNA = pseudouridine(55) in tRNA. Responsible for synthesis of pseudouridine from uracil-55 in the psi GC loop of transfer RNAs. This Legionella pneumophila subsp. pneumophila (strain Philadelphia 1 / ATCC 33152 / DSM 7513) protein is tRNA pseudouridine synthase B.